A 528-amino-acid polypeptide reads, in one-letter code: Na(+)/H(+) antiporter NhaB (528 aa).

A run of 10 helical transmembrane segments spans residues 20–39 (WFKI…FYFN), 66–86 (PGGL…SQVL), 97–117 (LLLV…LFVF), 139–159 (AFLS…TVAV), 241–261 (IRMS…CFLV), 304–324 (AVIG…VGLI), 349–369 (EEAL…AVII), 390–410 (LVIF…VFVG), 448–468 (ATPN…APLI), and 476–496 (VWMA…AIQL).

Belongs to the NhaB Na(+)/H(+) (TC 2.A.34) antiporter family.

Its subcellular location is the cell inner membrane. The enzyme catalyses 2 Na(+)(in) + 3 H(+)(out) = 2 Na(+)(out) + 3 H(+)(in). In terms of biological role, na(+)/H(+) antiporter that extrudes sodium in exchange for external protons. The protein is Na(+)/H(+) antiporter NhaB of Shewanella pealeana (strain ATCC 700345 / ANG-SQ1).